Here is a 766-residue protein sequence, read N- to C-terminus: Serine/threonine-protein kinase tousled-like 1 (766 aa).

Positions 1–198 (MSVQSSSGSL…PSPTALAFGD (198 aa)) are disordered. The span at 20 to 33 (STSPTPGSAAAARS) shows a compositional bias: low complexity. Threonine 38 is modified (phosphothreonine). Residues 43–64 (RPREGAMDELHSLDPRRQELLE) are compositionally biased toward basic and acidic residues. Phosphoserine is present on residues serine 54, serine 77, and serine 80. Residues 68–85 (TGVATGSTGSTGSCSVGA) are compositionally biased toward low complexity. A compositionally biased stretch (polar residues) spans 87–103 (ASTNNESSNHSFGSLGS). Over residues 105–121 (SDKESETPEKKQSESSR) the composition is skewed to basic and acidic residues. Residues serine 134, serine 159, serine 174, and serine 176 each carry the phosphoserine modification. Over residues 170 to 192 (SPQNSHSHSTPSSSVRPNSPSPT) the composition is skewed to low complexity. Residues 229-280 (NQDLEKKEGRIDDLLRANCDLRRQIDDQQKLLEKYKERLNKCISMSKKLLIE) adopt a coiled-coil conformation. Residues 344 to 381 (KLLGKRKPPTANNSQAPATNSEAKQRKTKAVNGAENDP) form a disordered region. Over residues 353 to 365 (TANNSQAPATNSE) the composition is skewed to polar residues. The stretch at 397–445 (HEQEEIFKLRLGHLKKEEAEIQAELERLERVRNLHIRELKRINNEDNSQ) forms a coiled coil. The Protein kinase domain maps to 456 to 734 (YLLLHLLGRG…VHQLANDPYL (279 aa)). Residues 462–470 (LGRGGFSEV) and lysine 485 each bind ATP. The active-site Proton acceptor is aspartate 586. Serine 743 carries the post-translational modification Phosphoserine. Positions 745 to 766 (GNLHMSGLTATPTPPSSSIITY) are disordered.

It belongs to the protein kinase superfamily. Ser/Thr protein kinase family. Heterodimer with TLK2. Mg(2+) is required as a cofactor. In terms of tissue distribution, ubiquitously expressed in all tissues examined.

It localises to the nucleus. The enzyme catalyses L-seryl-[protein] + ATP = O-phospho-L-seryl-[protein] + ADP + H(+). It catalyses the reaction L-threonyl-[protein] + ATP = O-phospho-L-threonyl-[protein] + ADP + H(+). Cell-cycle regulated, maximal activity in S-phase. Inactivated by phosphorylation at Ser-743, potentially by CHEK1. Functionally, rapidly and transiently inhibited by phosphorylation following the generation of DNA double-stranded breaks during S-phase. This is cell cycle checkpoint and ATM-pathway dependent and appears to regulate processes involved in chromatin assembly. Isoform 3 protects the cells from the ionizing radiation by facilitating the repair of DSBs. In vitro, phosphorylates histone H3 at 'Ser-10'. The polypeptide is Serine/threonine-protein kinase tousled-like 1 (Tlk1) (Mus musculus (Mouse)).